The sequence spans 444 residues: 1,4-beta-D-glucan glucohydrolase (444 aa).

Catalysis depends on Glu-164, which acts as the Proton donor. Residue Glu-349 is the Nucleophile of the active site.

This sequence belongs to the glycosyl hydrolase 1 family. As to quaternary structure, monomer.

It catalyses the reaction Hydrolysis of (1-&gt;4)-linkages in (1-&gt;4)-beta-D-glucans, to remove successive glucose units.. The catalysed reaction is Hydrolysis of terminal, non-reducing beta-D-glucosyl residues with release of beta-D-glucose.. It functions in the pathway glycan metabolism; cellulose degradation. Its pathway is glycan metabolism; beta-D-glucan degradation. Activated by glucose up to 200 mM when p-nitrophenyl-beta-glucoside is used as the substrate. This activation by end product concentrations may be due to a transglycosylation activity of the enzyme. Broad substrate specificity glycosidase. Releases glucose from soluble glucooligomers, with a preference for longer oligomers; acts more readily on cellotetraose than on cellobiose. Displays similar activities towards the disaccharides lactose and cellobiose. Is also able to hydrolyze various aryl-beta-glycosides in vitro. The protein is 1,4-beta-D-glucan glucohydrolase of Thermotoga neapolitana (strain ATCC 49049 / DSM 4359 / NBRC 107923 / NS-E).